The following is a 235-amino-acid chain: Ubiquinone/menaquinone biosynthesis C-methyltransferase UbiE (235 aa).

Positions 60 and 81 each coordinate S-adenosyl-L-methionine.

It belongs to the class I-like SAM-binding methyltransferase superfamily. MenG/UbiE family.

It carries out the reaction a 2-demethylmenaquinol + S-adenosyl-L-methionine = a menaquinol + S-adenosyl-L-homocysteine + H(+). It catalyses the reaction a 2-methoxy-6-(all-trans-polyprenyl)benzene-1,4-diol + S-adenosyl-L-methionine = a 5-methoxy-2-methyl-3-(all-trans-polyprenyl)benzene-1,4-diol + S-adenosyl-L-homocysteine + H(+). Its pathway is quinol/quinone metabolism; menaquinone biosynthesis; menaquinol from 1,4-dihydroxy-2-naphthoate: step 2/2. It participates in cofactor biosynthesis; ubiquinone biosynthesis. Its function is as follows. Methyltransferase required for the conversion of demethylmenaquinol (DMKH2) to menaquinol (MKH2) and the conversion of 2-polyprenyl-6-methoxy-1,4-benzoquinol (DDMQH2) to 2-polyprenyl-3-methyl-6-methoxy-1,4-benzoquinol (DMQH2). In Geotalea uraniireducens (strain Rf4) (Geobacter uraniireducens), this protein is Ubiquinone/menaquinone biosynthesis C-methyltransferase UbiE.